The following is a 352-amino-acid chain: Isoflavone-7-O-methyltransferase 9 (352 aa).

Residue 118 to 127 (VLDPTLSGSY) coordinates substrate. S-adenosyl-L-methionine contacts are provided by G196, D219, D239, M240, and K253. Residue H257 is the Proton acceptor of the active site.

It belongs to the class I-like SAM-binding methyltransferase superfamily. Cation-independent O-methyltransferase family. COMT subfamily. In terms of assembly, homodimer.

The catalysed reaction is a 7-hydroxyisoflavone + S-adenosyl-L-methionine = a 7-methoxyisoflavone + S-adenosyl-L-homocysteine + H(+). The protein operates within phytoalexin biosynthesis; medicarpin biosynthesis. In terms of biological role, transfers a methyl group to 7-hydroxyls of the isoflavones daidzein, genistein and 6,7,4'-trihydroxyisoflavone. Can also methylate (+)6a-hydroxymaackiain with lower efficiency. The polypeptide is Isoflavone-7-O-methyltransferase 9 (Medicago sativa (Alfalfa)).